The chain runs to 437 residues: ATP-dependent RNA helicase RhlB (437 aa).

The Q motif signature appears at 9–37 (QKFADLGLQPQVTEGLEKKGFEYCTPIQA). The region spanning 40–219 (LPVLLTGQDI…FEHMHNPEHV (180 aa)) is the Helicase ATP-binding domain. Residue 53 to 60 (AQTGTGKT) coordinates ATP. A DEAD box motif is present at residues 165-168 (DEAD). In terms of domain architecture, Helicase C-terminal spans 245–390 (ALLQTLIEEE…VSEYDASALI (146 aa)). The disordered stretch occupies residues 397–437 (IRMRAPRVQQRRTNTGGTRSGNRKPQGRRPRQPRQSAPKQS). Positions 417–428 (GNRKPQGRRPRQ) are enriched in basic residues.

This sequence belongs to the DEAD box helicase family. RhlB subfamily. As to quaternary structure, component of the RNA degradosome, which is a multiprotein complex involved in RNA processing and mRNA degradation.

The protein localises to the cytoplasm. The catalysed reaction is ATP + H2O = ADP + phosphate + H(+). DEAD-box RNA helicase involved in RNA degradation. Has RNA-dependent ATPase activity and unwinds double-stranded RNA. The sequence is that of ATP-dependent RNA helicase RhlB from Vibrio parahaemolyticus serotype O3:K6 (strain RIMD 2210633).